The primary structure comprises 606 residues: Glutamine--fructose-6-phosphate aminotransferase [isomerizing] (606 aa).

Residue cysteine 2 is the Nucleophile; for GATase activity of the active site. The Glutamine amidotransferase type-2 domain occupies 2–218 (CGIFGYLGEK…SGELAVLRIG (217 aa)). 2 SIS domains span residues 278 to 424 (FTES…HRQV) and 448 to 596 (LDSS…VDRP). Catalysis depends on lysine 601, which acts as the For Fru-6P isomerization activity.

In terms of assembly, homodimer.

The protein resides in the cytoplasm. It catalyses the reaction D-fructose 6-phosphate + L-glutamine = D-glucosamine 6-phosphate + L-glutamate. Catalyzes the first step in hexosamine metabolism, converting fructose-6P into glucosamine-6P using glutamine as a nitrogen source. The sequence is that of Glutamine--fructose-6-phosphate aminotransferase [isomerizing] from Chlamydia trachomatis serovar D (strain ATCC VR-885 / DSM 19411 / UW-3/Cx).